The following is a 250-amino-acid chain: Pyrroloquinoline-quinone synthase (250 aa).

This sequence belongs to the PqqC family.

The enzyme catalyses 6-(2-amino-2-carboxyethyl)-7,8-dioxo-1,2,3,4,7,8-hexahydroquinoline-2,4-dicarboxylate + 3 O2 = pyrroloquinoline quinone + 2 H2O2 + 2 H2O + H(+). Its pathway is cofactor biosynthesis; pyrroloquinoline quinone biosynthesis. Ring cyclization and eight-electron oxidation of 3a-(2-amino-2-carboxyethyl)-4,5-dioxo-4,5,6,7,8,9-hexahydroquinoline-7,9-dicarboxylic-acid to PQQ. The protein is Pyrroloquinoline-quinone synthase of Xanthomonas oryzae pv. oryzae (strain KACC10331 / KXO85).